The sequence spans 311 residues: Transcription factor bHLH145 (311 aa).

The bHLH domain occupies Phe253–Leu302.

In terms of assembly, homodimer.

Its subcellular location is the nucleus. This chain is Transcription factor bHLH145 (BHLH145), found in Arabidopsis thaliana (Mouse-ear cress).